The sequence spans 358 residues: Protein RecA (358 aa).

Residue 69–76 (GPESSGKT) coordinates ATP.

This sequence belongs to the RecA family.

The protein localises to the cytoplasm. In terms of biological role, can catalyze the hydrolysis of ATP in the presence of single-stranded DNA, the ATP-dependent uptake of single-stranded DNA by duplex DNA, and the ATP-dependent hybridization of homologous single-stranded DNAs. It interacts with LexA causing its activation and leading to its autocatalytic cleavage. The protein is Protein RecA of Trichormus variabilis (strain ATCC 29413 / PCC 7937) (Anabaena variabilis).